A 392-amino-acid chain; its full sequence is DNA replication and repair protein RecF (392 aa).

Residue 30–37 (GPNAAGKT) participates in ATP binding.

The protein belongs to the RecF family.

The protein resides in the cytoplasm. Functionally, the RecF protein is involved in DNA metabolism; it is required for DNA replication and normal SOS inducibility. RecF binds preferentially to single-stranded, linear DNA. It also seems to bind ATP. This is DNA replication and repair protein RecF from Chloroflexus aggregans (strain MD-66 / DSM 9485).